Reading from the N-terminus, the 395-residue chain is Elongation factor Tu (395 aa).

The tr-type G domain occupies 10-204 (KPHVNIGTIG…AVDSYIPTPQ (195 aa)). The interval 19–26 (GHVDHGKT) is G1. Residue 19 to 26 (GHVDHGKT) participates in GTP binding. Mg(2+) is bound at residue Thr-26. The segment at 60-64 (GITIN) is G2. The tract at residues 81–84 (DCPG) is G3. GTP contacts are provided by residues 81-85 (DCPGH) and 136-139 (NKCD). The G4 stretch occupies residues 136–139 (NKCD). Residues 174 to 176 (SAL) form a G5 region.

This sequence belongs to the TRAFAC class translation factor GTPase superfamily. Classic translation factor GTPase family. EF-Tu/EF-1A subfamily. In terms of assembly, monomer.

Its subcellular location is the cytoplasm. It catalyses the reaction GTP + H2O = GDP + phosphate + H(+). Its function is as follows. GTP hydrolase that promotes the GTP-dependent binding of aminoacyl-tRNA to the A-site of ribosomes during protein biosynthesis. The chain is Elongation factor Tu from Symbiobacterium thermophilum (strain DSM 24528 / JCM 14929 / IAM 14863 / T).